The following is a 360-amino-acid chain: Dihydroorotate dehydrogenase (quinone) (360 aa).

Residues 66 to 70 (AGFDK) and Thr90 contribute to the FMN site. Residue Lys70 coordinates substrate. Residue 115-119 (NRMGF) coordinates substrate. 2 residues coordinate FMN: Asn143 and Asn176. Asn176 contributes to the substrate binding site. The active-site Nucleophile is Ser179. Asn181 serves as a coordination point for substrate. FMN-binding residues include Lys212 and Thr240. 241 to 242 (NT) is a binding site for substrate. Residues Gly264, Gly293, and 314–315 (YT) each bind FMN.

This sequence belongs to the dihydroorotate dehydrogenase family. Type 2 subfamily. As to quaternary structure, monomer. Requires FMN as cofactor.

Its subcellular location is the cell membrane. The catalysed reaction is (S)-dihydroorotate + a quinone = orotate + a quinol. The protein operates within pyrimidine metabolism; UMP biosynthesis via de novo pathway; orotate from (S)-dihydroorotate (quinone route): step 1/1. Catalyzes the conversion of dihydroorotate to orotate with quinone as electron acceptor. In Mycobacterium ulcerans (strain Agy99), this protein is Dihydroorotate dehydrogenase (quinone).